The chain runs to 715 residues: Fatty acid oxidation complex subunit alpha (715 aa).

The tract at residues 1–194 (MHEQRAKPSA…RLGLVDDAVP (194 aa)) is enoyl-CoA hydratase. The interval 310–715 (HALHRIGILG…QGERFYPQGS (406 aa)) is 3-hydroxyacyl-CoA dehydrogenase.

The protein in the N-terminal section; belongs to the enoyl-CoA hydratase/isomerase family. This sequence in the central section; belongs to the 3-hydroxyacyl-CoA dehydrogenase family. As to quaternary structure, heterotetramer of two alpha chains (FadJ) and two beta chains (FadI).

The protein localises to the cytoplasm. The enzyme catalyses a (3S)-3-hydroxyacyl-CoA = a (2E)-enoyl-CoA + H2O. The catalysed reaction is a 4-saturated-(3S)-3-hydroxyacyl-CoA = a (3E)-enoyl-CoA + H2O. It carries out the reaction a (3S)-3-hydroxyacyl-CoA + NAD(+) = a 3-oxoacyl-CoA + NADH + H(+). It catalyses the reaction (3S)-3-hydroxybutanoyl-CoA = (3R)-3-hydroxybutanoyl-CoA. It participates in lipid metabolism; fatty acid beta-oxidation. Its function is as follows. Catalyzes the formation of a hydroxyacyl-CoA by addition of water on enoyl-CoA. Also exhibits 3-hydroxyacyl-CoA epimerase and 3-hydroxyacyl-CoA dehydrogenase activities. The polypeptide is Fatty acid oxidation complex subunit alpha (Serratia proteamaculans (strain 568)).